The following is a 377-amino-acid chain: Chaperone protein DnaJ (377 aa).

The J domain maps to 5-70; sequence DYYQILGIPK…EKRSAYDQYG (66 aa). Residues 132–210 form a CR-type zinc finger; that stretch reads GIKKEIQIPT…CHGQGRVETY (79 aa). Residues C145, C148, C162, C165, C184, C187, C198, and C201 each contribute to the Zn(2+) site. CXXCXGXG motif repeat units lie at residues 145–152, 162–169, 184–191, and 198–205; these read CKTCYGSG, CSTCHGKG, CPTCHGKG, and CNLCHGQG.

The protein belongs to the DnaJ family. Homodimer. Zn(2+) serves as cofactor.

It is found in the cytoplasm. Its function is as follows. Participates actively in the response to hyperosmotic and heat shock by preventing the aggregation of stress-denatured proteins and by disaggregating proteins, also in an autonomous, DnaK-independent fashion. Unfolded proteins bind initially to DnaJ; upon interaction with the DnaJ-bound protein, DnaK hydrolyzes its bound ATP, resulting in the formation of a stable complex. GrpE releases ADP from DnaK; ATP binding to DnaK triggers the release of the substrate protein, thus completing the reaction cycle. Several rounds of ATP-dependent interactions between DnaJ, DnaK and GrpE are required for fully efficient folding. Also involved, together with DnaK and GrpE, in the DNA replication of plasmids through activation of initiation proteins. This chain is Chaperone protein DnaJ, found in Buchnera aphidicola subsp. Acyrthosiphon pisum (strain Tuc7).